The following is a 160-amino-acid chain: uncharacterized protein (160 aa).

The chain crosses the membrane as a helical span at residues 47 to 67; the sequence is LLGGFANVAAILTPLVAVLAY.

It is found in the membrane. This is an uncharacterized protein from Sinorhizobium fredii (strain NBRC 101917 / NGR234).